The chain runs to 149 residues: Gamma-glutamylaminecyclotransferase (149 aa).

Substrate is bound at residue Y7 to L10. E82 functions as the Proton acceptor in the catalytic mechanism.

This sequence belongs to the gamma-glutamylcyclotransferase family. Monomer.

It carries out the reaction epsilon-(gamma-L-glutamyl)-L-lysine = 5-oxo-L-proline + L-lysine. Its function is as follows. Contributes to degradation of proteins cross-linked by transglutaminases by degrading the cross-link between a lysine and a glutamic acid residue. Catalyzes the formation of 5-oxo-L-proline from L-gamma-glutamyl-L-epsilon-lysine. Inactive with L-gamma-glutamyl-alpha-amino acid substrates such as L-gamma-glutamyl-L-alpha-cysteine and L-gamma-glutamyl-L-alpha-alanine. The sequence is that of Gamma-glutamylaminecyclotransferase (Ggact) from Mus musculus (Mouse).